Here is a 284-residue protein sequence, read N- to C-terminus: Bifunctional protein FolD (284 aa).

Residues 166-168 (GAS), serine 191, and isoleucine 232 contribute to the NADP(+) site.

Belongs to the tetrahydrofolate dehydrogenase/cyclohydrolase family. In terms of assembly, homodimer.

It carries out the reaction (6R)-5,10-methylene-5,6,7,8-tetrahydrofolate + NADP(+) = (6R)-5,10-methenyltetrahydrofolate + NADPH. The catalysed reaction is (6R)-5,10-methenyltetrahydrofolate + H2O = (6R)-10-formyltetrahydrofolate + H(+). It participates in one-carbon metabolism; tetrahydrofolate interconversion. Functionally, catalyzes the oxidation of 5,10-methylenetetrahydrofolate to 5,10-methenyltetrahydrofolate and then the hydrolysis of 5,10-methenyltetrahydrofolate to 10-formyltetrahydrofolate. This Neisseria meningitidis serogroup B (strain ATCC BAA-335 / MC58) protein is Bifunctional protein FolD.